A 244-amino-acid polypeptide reads, in one-letter code: ATP-dependent dethiobiotin synthetase BioD 1 (244 aa).

An ATP-binding site is contributed by 12–17 (NVGKTV). Thr16 contributes to the Mg(2+) binding site. The active site involves Lys37. ATP is bound at residue Asp68. Mg(2+) contacts are provided by Asp68 and Glu126. Residues 186–187 (NR), 215–217 (PYL), and Glu222 each bind ATP.

This sequence belongs to the dethiobiotin synthetase family. Homodimer. Mg(2+) is required as a cofactor.

The protein resides in the cytoplasm. The enzyme catalyses (7R,8S)-7,8-diammoniononanoate + CO2 + ATP = (4R,5S)-dethiobiotin + ADP + phosphate + 3 H(+). The protein operates within cofactor biosynthesis; biotin biosynthesis; biotin from 7,8-diaminononanoate: step 1/2. Catalyzes a mechanistically unusual reaction, the ATP-dependent insertion of CO2 between the N7 and N8 nitrogen atoms of 7,8-diaminopelargonic acid (DAPA, also called 7,8-diammoniononanoate) to form a ureido ring. The protein is ATP-dependent dethiobiotin synthetase BioD 1 of Pasteurella multocida (strain Pm70).